A 511-amino-acid polypeptide reads, in one-letter code: 4,4'-diapophytoene desaturase (4,4'-diapolycopene-forming) (511 aa).

It belongs to the carotenoid/retinoid oxidoreductase family.

The enzyme catalyses 15-cis-4,4'-diapophytoene + 4 FAD + 4 H(+) = all-trans-4,4'-diapolycopene + 4 FADH2. It functions in the pathway carotenoid biosynthesis. Involved in the biosynthesis of C30 carotenoids. Catalyzes four successive dehydrogenation reactions that lead to the introduction of four double bonds into 4,4'-diapophytoene (dehydrosqualene) to yield 4,4'-diapolycopene. In Methylomonas sp, this protein is 4,4'-diapophytoene desaturase (4,4'-diapolycopene-forming).